Consider the following 347-residue polypeptide: tRNA pseudouridine synthase D (347 aa).

The active-site Nucleophile is the Asp81. In terms of domain architecture, TRUD spans 158 to 305 (GVPNYFGSQR…RHDRREIALK (148 aa)).

It belongs to the pseudouridine synthase TruD family.

The catalysed reaction is uridine(13) in tRNA = pseudouridine(13) in tRNA. Its function is as follows. Responsible for synthesis of pseudouridine from uracil-13 in transfer RNAs. In Vibrio parahaemolyticus serotype O3:K6 (strain RIMD 2210633), this protein is tRNA pseudouridine synthase D.